The sequence spans 266 residues: MLRRIKVGSNLNKKESLLDAFVKTYLQILEPISSKRLKELADLKISCATIRNYFQILSKEGMLYQAHSSGARLPTFKAFENYWQKSLRFETLKVNEKRLKSASENFGLFTLLKKPSLERLERVIECEKRFLILDFLAFSCALGYSVKMEKFLLELVGRSVKEVRSIAASFNALSLARQLERLEYSNTQITRFNLMGLKTLLNSPLFFDILGGKVLERLSKGLHFIEPDCMLVTRPVEFQNKRMQLLCVGKLECDYEGFFQTISEEE.

This sequence belongs to the HrcA family.

Functionally, negative regulator of class I heat shock genes (grpE-dnaK-dnaJ and groELS operons). Prevents heat-shock induction of these operons. The chain is Heat-inducible transcription repressor HrcA from Helicobacter pylori (strain ATCC 700392 / 26695) (Campylobacter pylori).